A 229-amino-acid chain; its full sequence is Bcl-2-like protein 1 (229 aa).

Positions 4–24 (SNRELVIDFVSYKLSQRGHCW) match the BH4 motif. The short motif at 82–96 (VRQALRDAGDEFELR) is the BH3 element. The BH1 signature appears at 125 to 144 (ELFHDGVNWGRIVAFFSFGG). The short motif at 176-191 (PWIQENGGWERFVDLY) is the BH2 element. The helical transmembrane segment at 206 to 223 (FNKWLLTGATVAGVLLLG) threads the bilayer.

It belongs to the Bcl-2 family. As to expression, highest expression in organs with lymphoid development.

The protein resides in the mitochondrion membrane. Its subcellular location is the nucleus membrane. The protein localises to the mitochondrion matrix. It localises to the cytoplasm. It is found in the cytoskeleton. The protein resides in the microtubule organizing center. Its subcellular location is the centrosome. The protein localises to the cytosol. It localises to the cytoplasmic vesicle. It is found in the secretory vesicle. The protein resides in the synaptic vesicle membrane. Dominant regulator of apoptotic cell death. The long form displays cell death repressor activity, whereas the short isoform promotes apoptosis. Also acts as a regulator of G2 checkpoint and progression to cytokinesis during mitosis. The chain is Bcl-2-like protein 1 (BCL2L1) from Gallus gallus (Chicken).